The primary structure comprises 376 residues: MESYDIIANQPVVIDNGSGVIKAGFAGDQIPKYCFPNYVGRPKHMRVMAGALEGDLFIGPKAEEHRGLLTIRYPMEHGVVRDWNDMERIWQYVYSKDQLQTFSEEHPVLLTEAPLNPSKNREKAAEVFFETFNVPALFISMQAVLSLYATGRTTGVVLDSGDGVTHAVPIYEGFAMPHSIMRVDIAGRDVSRYLRLLLRKEGVDFHTSAEFEVVRTIKERACYLSINPQKDEALETEKVQYTLPDGSTLDVGPARFRAPELLFQPDLVGDESEGLHEVVAFAIHKSDMDLRRTLFANIVLSGGSTLFKGFGDRLLSEVKKLAPKDIKIKISAPQERLYSTWIGGSILASLDTFKKMWVSKKEYEEDGSRAIHRKTF.

M1 bears the N-acetylmethionine mark. Y4 is modified (3'-nitrotyrosine).

Belongs to the actin family. ARP1 subfamily.

It is found in the cytoplasm. The protein resides in the cytoskeleton. The protein localises to the microtubule organizing center. Its subcellular location is the centrosome. In terms of biological role, component of a multi-subunit complex involved in microtubule based vesicle motility. It is associated with the centrosome. The sequence is that of Beta-centractin (ACTR1B) from Homo sapiens (Human).